Consider the following 1187-residue polypeptide: uncharacterized protein (1187 aa).

Disordered regions lie at residues 302–405 (QKSQ…KPVG), 419–451 (QAFS…RASK), 511–551 (KAPG…LRLE), 1095–1134 (KSQR…KLPD), and 1148–1187 (PHLP…PASL). A compositionally biased stretch (low complexity) spans 321–333 (LPLSGPAGAPPLG). Residues 352 to 361 (SRRKARHKAS) are compositionally biased toward basic residues. 2 stretches are compositionally biased toward low complexity: residues 422 to 435 (SPLL…SPAA) and 517 to 534 (GTTL…GEPP). The span at 1096–1107 (SQRTPQGEQSRN) shows a compositional bias: polar residues. The segment covering 1160–1174 (TGGSFSSEGTGSQTS) has biased composition (low complexity).

This is an uncharacterized protein from Mus musculus (Mouse).